Here is a 425-residue protein sequence, read N- to C-terminus: Proline iminopeptidase (425 aa).

The AB hydrolase-1 domain occupies 52–315 (PWLLYLQGGP…EFPALAWAQG (264 aa)). Catalysis depends on serine 146, which acts as the Nucleophile. Aspartate 351 is an active-site residue. Histidine 404 serves as the catalytic Proton donor.

This sequence belongs to the peptidase S33 family. Homotetramer.

The protein localises to the cytoplasm. It carries out the reaction Release of N-terminal proline from a peptide.. Higher activity toward long peptides. Acts on hydroxyproline beta-naphthylamide with almost as high an activity as on proline beta-naphthylamide. The sequence is that of Proline iminopeptidase (pip) from Aeromonas sobria.